Reading from the N-terminus, the 172-residue chain is Large ribosomal subunit protein uL10 (172 aa).

It belongs to the universal ribosomal protein uL10 family. As to quaternary structure, part of the ribosomal stalk of the 50S ribosomal subunit. The N-terminus interacts with L11 and the large rRNA to form the base of the stalk. The C-terminus forms an elongated spine to which L12 dimers bind in a sequential fashion forming a multimeric L10(L12)X complex.

Its function is as follows. Forms part of the ribosomal stalk, playing a central role in the interaction of the ribosome with GTP-bound translation factors. The protein is Large ribosomal subunit protein uL10 of Brucella abortus (strain S19).